The primary structure comprises 658 residues: DNA mismatch repair protein MutL (658 aa).

A compositionally biased stretch (basic and acidic residues) spans 114 to 130 (RQEDSSHATQVKAEDGK). 2 disordered regions span residues 114-138 (RQEDSSHATQVKAEDGKLSSPTAAA) and 355-405 (PSEN…HSLS).

Belongs to the DNA mismatch repair MutL/HexB family.

This protein is involved in the repair of mismatches in DNA. It is required for dam-dependent methyl-directed DNA mismatch repair. May act as a 'molecular matchmaker', a protein that promotes the formation of a stable complex between two or more DNA-binding proteins in an ATP-dependent manner without itself being part of a final effector complex. This is DNA mismatch repair protein MutL from Neisseria gonorrhoeae (strain ATCC 700825 / FA 1090).